Reading from the N-terminus, the 129-residue chain is Small ribosomal subunit protein uS11 (129 aa).

The protein belongs to the universal ribosomal protein uS11 family. As to quaternary structure, part of the 30S ribosomal subunit. Interacts with proteins S7 and S18. Binds to IF-3.

Its function is as follows. Located on the platform of the 30S subunit, it bridges several disparate RNA helices of the 16S rRNA. Forms part of the Shine-Dalgarno cleft in the 70S ribosome. The protein is Small ribosomal subunit protein uS11 of Azobacteroides pseudotrichonymphae genomovar. CFP2.